The primary structure comprises 293 residues: Non-structural protein NS-S (293 aa).

An essential for inhibition of IFN-beta activation and interaction with host TBK1 region spans residues 21-29 (VRLEPSLGE). The involved in inclusion bodies formation stretch occupies residues 66 to 69 (PKNP). The interaction with host TNIP2 stretch occupies residues 148-220 (FEGDMILDSL…KPLLDCWDFF (73 aa)).

The protein belongs to the Bandavirus NS-S protein family. Interacts with the host E3 ubiquitin ligase TRIM25; this interaction sequesters TRIM25 in NSs-induced cytoplasmic inclusion bodies. Interacts with the host E3 ubiquitin ligase RIGI; this interaction sequesters RIGI in NSs-induced cytoplasmic inclusion bodies. Interacts with the host E3 ubiquitin ligase TBK1 (via N-terminus); this interaction sequesters TBK1 in NSs-induced cytoplasmic inclusion bodies and inhibits TBK1 phosphorylation. NSs does not interact with IKBKE/IKKE or IRF3. Interacts with host IRF7; this interaction sequesters IRF7 in NSs-induced cytoplasmic inclusion bodies. Interacts with host SYNGR2; this interaction is essential to promoting the formation of the inclusion bodies to become virus factories for viral RNA replication through its interaction with NSs. Interacts with host STAT2; this interaction sequesters STAT2 in NSs-induced cytoplasmic inclusion bodies. Interacts with host TNIP2; this interaction promotes TPL2 complex formation and signaling activity leading to IL-10 production. Interacts with host TRIM21 (via B30.2/SPRY domain); this interaction activates host NFE2L2-mediated transcriptional activation of antioxidant genes. Interacts with host CDK1; this interaction is inclusion body dependent, it inhibits the formation and nuclear import of the cyclin B1-CDK1 complex and leads to host cell cycle arrest.

The protein resides in the host cytoplasm. It localises to the host cytoplasmic vesicle. In terms of biological role, sequesters host STAT2 into viral inclusion bodies. Impairs IFN-stimulated phosphorylation and nuclear translocation of host STAT2, thereby suppressing type-I IFN antiviral signaling. Sequesters host TRIM25, RIGI, TBK1/IKK complex components (TBK1, IKBKE/IKKE, and IRF3) and IRF7 into viral inclusion bodies, thereby inhibiting the IFN responses. Inhibits TRIM25-mediated ubiquitination of the RIGI. The sequestration of IKBKE/IKKE, and IRF3 occurs via the interaction with TBK1. Sequestration and inhibition of host TBK1 probably participates to the cytokine storm induced by the virus. Also inhibits the phosphorylation of host TBK1. Interacts with host TNIP2 and promotes TPL2-TNIP2-p105 complex formation leading to IL-10 induction. By interacting with CDK1, induces host cell arrest at the G2/M transition to promote viral replication. Requested for the formation of the viral cytoplasmic inclusion bodies. In SFTS phlebovirus (isolate SFTSV/Human/China/HB29/2010) (Severe fever with thrombocytopenia virus), this protein is Non-structural protein NS-S (NSS).